Reading from the N-terminus, the 30-residue chain is Protamine-YII (30 aa).

The disordered stretch occupies residues 1–30 (PRRRTRRASRPVRRRRPRRVSRRRRARRRR).

In terms of tissue distribution, testis.

The protein resides in the nucleus. The protein localises to the chromosome. Its function is as follows. Protamines substitute for histones in the chromatin of sperm during the haploid phase of spermatogenesis. They compact sperm DNA into a highly condensed, stable and inactive complex. The sequence is that of Protamine-YII from Clupea harengus (Atlantic herring).